Here is a 381-residue protein sequence, read N- to C-terminus: Protein COS1 (381 aa).

The Cytoplasmic segment spans residues 1-42 (MKENELKNEKSVDVLSFKQLESQKIVLPQDLFRSSFTWFCYE). The chain crosses the membrane as a helical span at residues 43–63 (IYKSLAFRIWMLLWLPLSVWW). Over 64–72 (KLSNNCIYP) the chain is Extracellular. A helical transmembrane segment spans residues 73–93 (LIVSLLVLFLGPIFVLVICGL). The Cytoplasmic portion of the chain corresponds to 94 to 231 (SRKRSLSKQL…YRFKLTWFLK (138 aa)). A helical membrane pass occupies residues 232 to 252 (RISNIFMLIPFLNFLCCIYVS). The Extracellular segment spans residues 253 to 254 (RG). Residues 255–275 (MCLLLRTFYLGWILFMLVQGF) traverse the membrane as a helical segment. Over 276–381 (QNMRMIVLSV…QLSCSEESLA (106 aa)) the chain is Cytoplasmic.

Belongs to the DUP/COS family.

It localises to the membrane. The polypeptide is Protein COS1 (COS1) (Saccharomyces cerevisiae (strain ATCC 204508 / S288c) (Baker's yeast)).